The sequence spans 631 residues: 1-deoxy-D-xylulose-5-phosphate synthase (631 aa).

Thiamine diphosphate-binding positions include His87 and Gly128 to Ser130. Position 159 (Asp159) interacts with Mg(2+). Residues Gly160 to Ala161, Asn188, Phe295, and Glu377 contribute to the thiamine diphosphate site. Asn188 is a Mg(2+) binding site.

It belongs to the transketolase family. DXPS subfamily. Homodimer. Mg(2+) serves as cofactor. Thiamine diphosphate is required as a cofactor.

It catalyses the reaction D-glyceraldehyde 3-phosphate + pyruvate + H(+) = 1-deoxy-D-xylulose 5-phosphate + CO2. The protein operates within metabolic intermediate biosynthesis; 1-deoxy-D-xylulose 5-phosphate biosynthesis; 1-deoxy-D-xylulose 5-phosphate from D-glyceraldehyde 3-phosphate and pyruvate: step 1/1. Functionally, catalyzes the acyloin condensation reaction between C atoms 2 and 3 of pyruvate and glyceraldehyde 3-phosphate to yield 1-deoxy-D-xylulose-5-phosphate (DXP). In Pseudomonas putida (strain W619), this protein is 1-deoxy-D-xylulose-5-phosphate synthase.